The sequence spans 208 residues: Thiamine-phosphate synthase (208 aa).

Residues 38–42 (QYRSK) and N70 each bind 4-amino-2-methyl-5-(diphosphooxymethyl)pyrimidine. Mg(2+)-binding residues include D71 and D90. Residue T109 coordinates 4-amino-2-methyl-5-(diphosphooxymethyl)pyrimidine. 136–138 (SAT) is a binding site for 2-[(2R,5Z)-2-carboxy-4-methylthiazol-5(2H)-ylidene]ethyl phosphate. A 4-amino-2-methyl-5-(diphosphooxymethyl)pyrimidine-binding site is contributed by K139. Residues G166 and 186–187 (VS) each bind 2-[(2R,5Z)-2-carboxy-4-methylthiazol-5(2H)-ylidene]ethyl phosphate.

The protein belongs to the thiamine-phosphate synthase family. Mg(2+) serves as cofactor.

It catalyses the reaction 2-[(2R,5Z)-2-carboxy-4-methylthiazol-5(2H)-ylidene]ethyl phosphate + 4-amino-2-methyl-5-(diphosphooxymethyl)pyrimidine + 2 H(+) = thiamine phosphate + CO2 + diphosphate. It carries out the reaction 2-(2-carboxy-4-methylthiazol-5-yl)ethyl phosphate + 4-amino-2-methyl-5-(diphosphooxymethyl)pyrimidine + 2 H(+) = thiamine phosphate + CO2 + diphosphate. The catalysed reaction is 4-methyl-5-(2-phosphooxyethyl)-thiazole + 4-amino-2-methyl-5-(diphosphooxymethyl)pyrimidine + H(+) = thiamine phosphate + diphosphate. Its pathway is cofactor biosynthesis; thiamine diphosphate biosynthesis; thiamine phosphate from 4-amino-2-methyl-5-diphosphomethylpyrimidine and 4-methyl-5-(2-phosphoethyl)-thiazole: step 1/1. In terms of biological role, condenses 4-methyl-5-(beta-hydroxyethyl)thiazole monophosphate (THZ-P) and 2-methyl-4-amino-5-hydroxymethyl pyrimidine pyrophosphate (HMP-PP) to form thiamine monophosphate (TMP). This chain is Thiamine-phosphate synthase, found in Aromatoleum aromaticum (strain DSM 19018 / LMG 30748 / EbN1) (Azoarcus sp. (strain EbN1)).